Consider the following 498-residue polypeptide: Cytochrome P450 monooxygenase 110 (498 aa).

The chain crosses the membrane as a helical span at residues 7 to 24 (YVFALLGILATLYFVRWS). N-linked (GlcNAc...) asparagine glycosylation occurs at Asn425. Cys440 contributes to the heme binding site.

This sequence belongs to the cytochrome P450 family. It depends on heme as a cofactor.

The protein resides in the membrane. The protein operates within secondary metabolite biosynthesis. Its function is as follows. Cytochrome P450 monooxygenase that is able to use dehydroabietic acid and testosterone as substrates for oxidation, suggesting that the natural substrate(s) may be structurally related to steroid compounds. This Postia placenta (strain ATCC 44394 / Madison 698-R) (Brown rot fungus) protein is Cytochrome P450 monooxygenase 110.